The following is a 392-amino-acid chain: Putative 8-amino-7-oxononanoate synthase (392 aa).

Arg-22 is a binding site for substrate. Residue 109–110 (GW) participates in pyridoxal 5'-phosphate binding. His-139 lines the substrate pocket. Pyridoxal 5'-phosphate is bound by residues Ser-187, 212–215 (DEAH), and 239–242 (TFSK). Lys-242 carries the N6-(pyridoxal phosphate)lysine modification. Residue Thr-356 participates in substrate binding.

This sequence belongs to the class-II pyridoxal-phosphate-dependent aminotransferase family. BioF subfamily. Homodimer. Requires pyridoxal 5'-phosphate as cofactor.

The enzyme catalyses 6-carboxyhexanoyl-[ACP] + L-alanine + H(+) = (8S)-8-amino-7-oxononanoate + holo-[ACP] + CO2. The protein operates within cofactor biosynthesis; biotin biosynthesis. Its function is as follows. Catalyzes the decarboxylative condensation of pimeloyl-[acyl-carrier protein] and L-alanine to produce 8-amino-7-oxononanoate (AON), [acyl-carrier protein], and carbon dioxide. This is Putative 8-amino-7-oxononanoate synthase (bioF) from Paramagnetospirillum magneticum (strain ATCC 700264 / AMB-1) (Magnetospirillum magneticum).